We begin with the raw amino-acid sequence, 141 residues long: Lutropin subunit beta (141 aa).

Residues 1–21 (MERYQELTVLLLLLLLEGGSG) form the signal peptide. 6 disulfides stabilise this stretch: Cys30/Cys78, Cys44/Cys93, Cys47/Cys131, Cys55/Cys109, Cys59/Cys111, and Cys114/Cys121. Asn34 carries an N-linked (GlcNAc...) asparagine glycan.

This sequence belongs to the glycoprotein hormones subunit beta family. As to quaternary structure, heterodimer of a common alpha chain and a unique beta chain which confers biological specificity to thyrotropin, lutropin, follitropin and gonadotropin.

The protein resides in the secreted. Promotes spermatogenesis and ovulation by stimulating the testes and ovaries to synthesize steroids. The sequence is that of Lutropin subunit beta (LHB) from Monodelphis domestica (Gray short-tailed opossum).